Here is a 363-residue protein sequence, read N- to C-terminus: Cytochrome b (363 aa).

A run of 4 helical transmembrane segments spans residues 23 to 43 (FGFI…MLSF), 67 to 89 (WFVR…LHIM), 102 to 122 (SWYS…VGYV), and 164 to 184 (FFSI…FHLY). Heme b-binding residues include histidine 73 and histidine 87. Positions 168 and 182 each coordinate heme b. An a ubiquinone-binding site is contributed by histidine 187. The next 4 membrane-spanning stretches (helical) occupy residues 210–230 (VLFS…VQSG), 271–291 (VFPT…LLVL), 310–330 (VWTT…SIGK), and 332–352 (VVHV…VLFI).

Belongs to the cytochrome b family. In terms of assembly, the main subunits of complex b-c1 are: cytochrome b, cytochrome c1 and the Rieske protein. Requires heme b as cofactor.

The protein resides in the mitochondrion inner membrane. Its function is as follows. Component of the ubiquinol-cytochrome c reductase complex (complex III or cytochrome b-c1 complex) that is part of the mitochondrial respiratory chain. The b-c1 complex mediates electron transfer from ubiquinol to cytochrome c. Contributes to the generation of a proton gradient across the mitochondrial membrane that is then used for ATP synthesis. This Theileria annulata protein is Cytochrome b (MT-CYB).